A 401-amino-acid chain; its full sequence is Phosphoglycerate kinase (401 aa).

Residues 24 to 26 (DFN), R40, 63 to 66 (HFGR), R122, and R155 contribute to the substrate site. ATP contacts are provided by residues K206, G297, E328, and 357–360 (GGDS).

The protein belongs to the phosphoglycerate kinase family. In terms of assembly, monomer.

Its subcellular location is the cytoplasm. It catalyses the reaction (2R)-3-phosphoglycerate + ATP = (2R)-3-phospho-glyceroyl phosphate + ADP. Its pathway is carbohydrate degradation; glycolysis; pyruvate from D-glyceraldehyde 3-phosphate: step 2/5. The protein is Phosphoglycerate kinase of Prochlorococcus marinus (strain NATL2A).